The sequence spans 156 residues: Small ribosomal subunit protein uS7 (156 aa).

It belongs to the universal ribosomal protein uS7 family. As to quaternary structure, part of the 30S ribosomal subunit. Contacts proteins S9 and S11.

In terms of biological role, one of the primary rRNA binding proteins, it binds directly to 16S rRNA where it nucleates assembly of the head domain of the 30S subunit. Is located at the subunit interface close to the decoding center, probably blocks exit of the E-site tRNA. The sequence is that of Small ribosomal subunit protein uS7 from Gloeothece citriformis (strain PCC 7424) (Cyanothece sp. (strain PCC 7424)).